A 442-amino-acid chain; its full sequence is UDP-glycosyltransferase 79B8 (442 aa).

UDP-alpha-D-glucose is bound by residues Ser260, 319–321, 336–344, and 358–361; these read VQQ, HCGPGTIWE, and LGDQ.

Belongs to the UDP-glycosyltransferase family.

This Arabidopsis thaliana (Mouse-ear cress) protein is UDP-glycosyltransferase 79B8 (UGT79B8).